The primary structure comprises 471 residues: 3-isopropylmalate dehydratase large subunit (471 aa).

Positions 347, 407, and 410 each coordinate [4Fe-4S] cluster.

Belongs to the aconitase/IPM isomerase family. LeuC type 1 subfamily. In terms of assembly, heterodimer of LeuC and LeuD. The cofactor is [4Fe-4S] cluster.

It catalyses the reaction (2R,3S)-3-isopropylmalate = (2S)-2-isopropylmalate. The protein operates within amino-acid biosynthesis; L-leucine biosynthesis; L-leucine from 3-methyl-2-oxobutanoate: step 2/4. Catalyzes the isomerization between 2-isopropylmalate and 3-isopropylmalate, via the formation of 2-isopropylmaleate. The chain is 3-isopropylmalate dehydratase large subunit from Geobacillus thermodenitrificans (strain NG80-2).